The chain runs to 156 residues: Transcription elongation factor GreA (156 aa).

Residues 1–32 (MKKVRLTREGYEKLKKELEDLKRKFMYEISER) adopt a coiled-coil conformation.

Belongs to the GreA/GreB family.

Its function is as follows. Necessary for efficient RNA polymerase transcription elongation past template-encoded arresting sites. The arresting sites in DNA have the property of trapping a certain fraction of elongating RNA polymerases that pass through, resulting in locked ternary complexes. Cleavage of the nascent transcript by cleavage factors such as GreA or GreB allows the resumption of elongation from the new 3'terminus. GreA releases sequences of 2 to 3 nucleotides. In Thermotoga petrophila (strain ATCC BAA-488 / DSM 13995 / JCM 10881 / RKU-1), this protein is Transcription elongation factor GreA.